Consider the following 615-residue polypeptide: DNA mismatch repair protein MutL (615 aa).

A disordered region spans residues 362 to 397 (HFAEPAVREPVAPRYSPAPASGSRPAAPWPNAQPGY). Residues 373–387 (APRYSPAPASGSRPA) show a composition bias toward low complexity.

This sequence belongs to the DNA mismatch repair MutL/HexB family.

Its function is as follows. This protein is involved in the repair of mismatches in DNA. It is required for dam-dependent methyl-directed DNA mismatch repair. May act as a 'molecular matchmaker', a protein that promotes the formation of a stable complex between two or more DNA-binding proteins in an ATP-dependent manner without itself being part of a final effector complex. The chain is DNA mismatch repair protein MutL from Escherichia coli O81 (strain ED1a).